A 37-amino-acid polypeptide reads, in one-letter code: Photosystem II reaction center protein L (37 aa).

Residues 1 to 13 (MEPNPNRQPVELN) are Cytoplasmic-facing. Residues 14–35 (RTSLYLGLLLILVLALLFSSYF) form a helical membrane-spanning segment. Topologically, residues 36–37 (FN) are lumenal.

In terms of assembly, PSII is composed of 1 copy each of membrane proteins PsbA, PsbB, PsbC, PsbD, PsbE, PsbF, PsbH, PsbI, PsbJ, PsbK, PsbL, PsbM, PsbT, PsbX, PsbY, PsbZ, Psb30/Ycf12, peripheral proteins PsbO, CyanoQ (PsbQ), PsbU, PsbV and a large number of cofactors. It forms dimeric complexes. Part of a photosystem II (PSII) assembly intermediate complex PSII-I; crystallized from a strain deleted of psbJ, it forms monomeric PSII before addition of the oxygen evolving complex. PSII-I includes 3 assembly factors not found in mature PSII (Psb27, Psb28 and Psb34). The cofactor is PSII binds multiple chlorophylls, carotenoids and specific lipids..

It is found in the cellular thylakoid membrane. One of the components of the core complex of photosystem II (PSII). PSII is a light-driven water:plastoquinone oxidoreductase that uses light energy to abstract electrons from H(2)O, generating O(2) and a proton gradient subsequently used for ATP formation. It consists of a core antenna complex that captures photons, and an electron transfer chain that converts photonic excitation into a charge separation. This subunit is found at the monomer-monomer interface and is required for correct PSII assembly and/or dimerization. This subunit may make specific contacts with lipid(s). The protein is Photosystem II reaction center protein L of Thermosynechococcus vestitus (strain NIES-2133 / IAM M-273 / BP-1).